We begin with the raw amino-acid sequence, 101 residues long: MTIKQGDKVQVIAGSYKGEITEVLKVIRKSNSLILKNINIKNKHVKPKKEGEVGQIKQFEAPIHRSNVMLYDEESQIRSRSKFIISQDGKKVRVLKKLVKN.

Belongs to the universal ribosomal protein uL24 family. In terms of assembly, part of the 50S ribosomal subunit.

The protein localises to the plastid. It is found in the chloroplast. Functionally, one of two assembly initiator proteins, it binds directly to the 5'-end of the 23S rRNA, where it nucleates assembly of the 50S subunit. The protein is Large ribosomal subunit protein uL24c (rpl24) of Guillardia theta (Cryptophyte).